Consider the following 128-residue polypeptide: MTKEELINEIKNMTVGELAELVKALEDEFGVSAAAPVMAAVPGVAGVSPAQQEEEKTDFKVVLKGFGDKKIGVIKVVREITNLGLKEAKDLVEKAGTPDAVIKEGVPKEEAEEIKKKLEEAGAEVELK.

Belongs to the bacterial ribosomal protein bL12 family. As to quaternary structure, homodimer. Part of the ribosomal stalk of the 50S ribosomal subunit. Forms a multimeric L10(L12)X complex, where L10 forms an elongated spine to which 2 to 4 L12 dimers bind in a sequential fashion. Binds GTP-bound translation factors.

Its function is as follows. Forms part of the ribosomal stalk which helps the ribosome interact with GTP-bound translation factors. Is thus essential for accurate translation. The chain is Large ribosomal subunit protein bL12 from Petrotoga mobilis (strain DSM 10674 / SJ95).